The primary structure comprises 405 residues: L-carnitine CoA-transferase (405 aa).

Residues K97 and R104 each contribute to the CoA site. D169 (nucleophile) is an active-site residue.

It belongs to the CoA-transferase III family. CaiB subfamily. In terms of assembly, homodimer.

It is found in the cytoplasm. The enzyme catalyses crotonobetainyl-CoA + (R)-carnitine = crotonobetaine + (R)-carnitinyl-CoA. It catalyses the reaction 4-(trimethylamino)butanoyl-CoA + (R)-carnitine = (R)-carnitinyl-CoA + 4-(trimethylamino)butanoate. The protein operates within amine and polyamine metabolism; carnitine metabolism. In terms of biological role, catalyzes the reversible transfer of the CoA moiety from gamma-butyrobetainyl-CoA to L-carnitine to generate L-carnitinyl-CoA and gamma-butyrobetaine. Is also able to catalyze the reversible transfer of the CoA moiety from gamma-butyrobetainyl-CoA or L-carnitinyl-CoA to crotonobetaine to generate crotonobetainyl-CoA. This is L-carnitine CoA-transferase from Escherichia coli (strain SE11).